The sequence spans 343 residues: Probable dual-specificity RNA methyltransferase RlmN (343 aa).

Catalysis depends on Glu91, which acts as the Proton acceptor. Residues 97–326 enclose the Radical SAM core domain; that stretch reads HPDRITACIS…AEIRREKGAD (230 aa). Cysteines 104 and 331 form a disulfide. [4Fe-4S] cluster-binding residues include Cys111, Cys115, and Cys118. Residues 158–159, Ser190, 213–215, and Asn289 each bind S-adenosyl-L-methionine; these read GE and SLH. Cys331 acts as the S-methylcysteine intermediate in catalysis.

The protein belongs to the radical SAM superfamily. RlmN family. Requires [4Fe-4S] cluster as cofactor.

Its subcellular location is the cytoplasm. It catalyses the reaction adenosine(2503) in 23S rRNA + 2 reduced [2Fe-2S]-[ferredoxin] + 2 S-adenosyl-L-methionine = 2-methyladenosine(2503) in 23S rRNA + 5'-deoxyadenosine + L-methionine + 2 oxidized [2Fe-2S]-[ferredoxin] + S-adenosyl-L-homocysteine. The catalysed reaction is adenosine(37) in tRNA + 2 reduced [2Fe-2S]-[ferredoxin] + 2 S-adenosyl-L-methionine = 2-methyladenosine(37) in tRNA + 5'-deoxyadenosine + L-methionine + 2 oxidized [2Fe-2S]-[ferredoxin] + S-adenosyl-L-homocysteine. In terms of biological role, specifically methylates position 2 of adenine 2503 in 23S rRNA and position 2 of adenine 37 in tRNAs. In Thermotoga petrophila (strain ATCC BAA-488 / DSM 13995 / JCM 10881 / RKU-1), this protein is Probable dual-specificity RNA methyltransferase RlmN.